A 152-amino-acid chain; its full sequence is Small ribosomal subunit protein bS16 (152 aa).

The tract at residues 84–152 (WKWEASNNPQ…EAAAEEEKSE (69 aa)) is disordered. Basic and acidic residues predominate over residues 97–123 (PGQKAKELAAEKAEKEADRKAAEEEAK). Positions 124–144 (AAAAAPAAEEAPAEEAPAAEA) are enriched in low complexity.

The protein belongs to the bacterial ribosomal protein bS16 family.

This is Small ribosomal subunit protein bS16 from Maricaulis maris (strain MCS10) (Caulobacter maris).